A 127-amino-acid polypeptide reads, in one-letter code: Flagellar hook-basal body complex protein FliE (127 aa).

This sequence belongs to the FliE family.

Its subcellular location is the bacterial flagellum basal body. In Leptospira interrogans serogroup Icterohaemorrhagiae serovar copenhageni (strain Fiocruz L1-130), this protein is Flagellar hook-basal body complex protein FliE.